A 397-amino-acid polypeptide reads, in one-letter code: Riboflavin biosynthesis protein RibBA (397 aa).

The tract at residues Met1–His199 is DHBP synthase. D-ribulose 5-phosphate is bound by residues Arg26 to Glu27, Asp31, Arg138 to Thr142, and Glu162. Glu27 contacts Mg(2+). His141 serves as a coordination point for Mg(2+). Positions His200 to Leu397 are GTP cyclohydrolase II. A GTP-binding site is contributed by Arg250–Glu254. Residues Cys255, Cys266, and Cys268 each contribute to the Zn(2+) site. Residues Gln271, Glu293–Arg295, and Thr315 contribute to the GTP site. Asp327 acts as the Proton acceptor; for GTP cyclohydrolase activity in catalysis. Arg329 (nucleophile; for GTP cyclohydrolase activity) is an active-site residue. Thr350 and Lys355 together coordinate GTP.

This sequence in the N-terminal section; belongs to the DHBP synthase family. The protein in the C-terminal section; belongs to the GTP cyclohydrolase II family. Mg(2+) serves as cofactor. Requires Mn(2+) as cofactor. It depends on Zn(2+) as a cofactor.

It catalyses the reaction D-ribulose 5-phosphate = (2S)-2-hydroxy-3-oxobutyl phosphate + formate + H(+). The enzyme catalyses GTP + 4 H2O = 2,5-diamino-6-hydroxy-4-(5-phosphoribosylamino)-pyrimidine + formate + 2 phosphate + 3 H(+). Its pathway is cofactor biosynthesis; riboflavin biosynthesis; 2-hydroxy-3-oxobutyl phosphate from D-ribulose 5-phosphate: step 1/1. It participates in cofactor biosynthesis; riboflavin biosynthesis; 5-amino-6-(D-ribitylamino)uracil from GTP: step 1/4. Functionally, catalyzes the conversion of D-ribulose 5-phosphate to formate and 3,4-dihydroxy-2-butanone 4-phosphate. Catalyzes the conversion of GTP to 2,5-diamino-6-ribosylamino-4(3H)-pyrimidinone 5'-phosphate (DARP), formate and pyrophosphate. This is Riboflavin biosynthesis protein RibBA from Bacillus cereus (strain B4264).